The primary structure comprises 181 residues: TATA-box-binding protein (181 aa).

A run of 2 repeats spans residues 8–84 and 99–175.

It belongs to the TBP family.

Its function is as follows. General factor that plays a role in the activation of archaeal genes transcribed by RNA polymerase. Binds specifically to the TATA box promoter element which lies close to the position of transcription initiation. The polypeptide is TATA-box-binding protein (tbp) (Methanothermobacter thermautotrophicus (strain ATCC 29096 / DSM 1053 / JCM 10044 / NBRC 100330 / Delta H) (Methanobacterium thermoautotrophicum)).